The chain runs to 260 residues: uncharacterized protein (260 aa).

In terms of domain architecture, PNPLA spans 8-166 (LALGSGGARG…VDRIPVSVVK (159 aa)). The short motif at 39 to 43 (GSSMG) is the GXSXG element. The active-site Nucleophile is Ser-41. Asp-153 acts as the Proton acceptor in catalysis. A DGA/G motif is present at residues 153–155 (DGA).

This sequence belongs to the NTE family.

This is an uncharacterized protein from Bacillus subtilis (strain 168).